A 356-amino-acid polypeptide reads, in one-letter code: Gluconolactonase (356 aa).

The segment at residues 1–35 is a signal peptide (tat-type signal); the sequence is MTTGRMSRRECLSAAVMVPIAAMTATATITGSAQA.

In terms of assembly, homodimer. Predicted to be exported by the Tat system. The position of the signal peptide cleavage has been experimentally proven.

Its subcellular location is the periplasm. It carries out the reaction D-glucono-1,5-lactone + H2O = D-gluconate + H(+). It functions in the pathway carbohydrate acid metabolism; D-gluconate biosynthesis; D-gluconate from D-glucono-1,5-lactone: step 1/1. Functionally, hydrolyzes the gluconolactone formed by glucose-fructose oxidoreductase, and that formed in aerobic conditions by the glucose dehydrogenase present. The chain is Gluconolactonase (gnl) from Zymomonas mobilis subsp. mobilis (strain ATCC 31821 / ZM4 / CP4).